Consider the following 519-residue polypeptide: Baeyer-Villiger monooxygenase (519 aa).

FAD-binding positions include glutamate 41, 49 to 52 (TWRD), aspartate 61, tyrosine 67, and valine 110. An NADP(+)-binding site is contributed by 59–61 (ACD). NADP(+)-binding positions include 183–189 (TGASAIQ), 206–207 (RT), and 292–293 (KR). Methionine 399 contacts FAD. A disordered region spans residues 499–519 (GAKAAEADTGADTGADAEVSA).

Belongs to the FAD-binding monooxygenase family. FAD is required as a cofactor.

Catalyzes a Baeyer-Villiger oxidation reaction, i.e. the insertion of an oxygen atom into a carbon-carbon bond adjacent to a carbonyl, which converts ketones to esters or lactones using NADPH and/or NADH as an electron donor. Thus, can convert bicyclo[3.2.0]hept-2-en-6-one into the oxidative lactone products 2-oxabicyclo[3.3.0]oct-6-en-3-one and 3-oxabicyclo[3.3.0]oct-6-en-2-one. Is also able to catalyze the sulfoxidation of methyl phenyl sulfide (thioanisole). The protein is Baeyer-Villiger monooxygenase of Streptomyces coelicolor (strain ATCC BAA-471 / A3(2) / M145).